The primary structure comprises 546 residues: MKLLASTVLMGAAAASIAPQQQVLKNPFQSASKPISEAWSKSMESLNHLTDSMKDMTSEAKAVWDEVSTLFPEAMDRATFFQQPKPHTRKPDTAWDYVVKGADIQNVWVENSKGEKEREIDGKLEKYNMRAKKVDPTKLGVDKVKQYSGYLDDEENDKHLFYWFFESRNDPKNDPVVLWLNGGPGCSSLTGLFLELGPASIDKNGKLHNNPYSWNANASVIFLDQPVNVGYSYSGGSVSNTIAAGKDVYALLTLFFKQFPEYAKQDFHIAGESYAGHYIPVFTHEILSHKKRNINLKSVLIGNGLTDGLTQYEHYRPMACGEGGYPAVLDSSECKAMDNALPRCQSLIQSCYDSESVWSCVPASIYCNNAMMGPYQRTGQNVYDIRGKCEDSSNLCYSALGWISDYLNQAAVQKELGVEVSSYDSCNFDINRNFLFQGDWMQPFHRLVPDILEQIPVLIYAGDADFICNWLGNQAWTEALEWPGQKGFNAAKTKDLQLENGHKTGTFKSSGNFTFARIFGAGHMVPMDQPEASLDFLNKWLNDYTL.

Residues 1-17 (MKLLASTVLMGAAAASI) form the signal peptide. Residues 18-132 (APQQQVLKNP…KLEKYNMRAK (115 aa)) constitute a propeptide that is removed on maturation. 5 disulfide bridges follow: Cys-186-Cys-426, Cys-320-Cys-334, Cys-344-Cys-367, Cys-351-Cys-360, and Cys-389-Cys-396. Asn-217 is a glycosylation site (N-linked (GlcNAc...) asparagine). Residue Ser-273 is part of the active site. Residue Asp-465 is part of the active site. An N-linked (GlcNAc...) asparagine glycan is attached at Asn-512. The active site involves His-523.

It belongs to the peptidase S10 family.

It is found in the vacuole. The catalysed reaction is Release of a C-terminal amino acid with broad specificity.. Vacuolar carboxypeptidase involved in degradation of small peptides. Digests preferentially peptides containing an aliphatic or hydrophobic residue in P1' position, as well as methionine, leucine or phenylalanine in P1 position of ester substrate. This is Carboxypeptidase Y homolog A (cpyA) from Sclerotinia sclerotiorum (strain ATCC 18683 / 1980 / Ss-1) (White mold).